The chain runs to 169 residues: Ribosome maturation factor RimM (169 aa).

In terms of domain architecture, PRC barrel spans 97-169 (PGEYYWYQLI…VITVDWDMNF (73 aa)).

It belongs to the RimM family. As to quaternary structure, binds ribosomal protein uS19.

It localises to the cytoplasm. Its function is as follows. An accessory protein needed during the final step in the assembly of 30S ribosomal subunit, possibly for assembly of the head region. Essential for efficient processing of 16S rRNA. May be needed both before and after RbfA during the maturation of 16S rRNA. It has affinity for free ribosomal 30S subunits but not for 70S ribosomes. This is Ribosome maturation factor RimM from Legionella pneumophila (strain Paris).